The primary structure comprises 497 residues: Probable cytosol aminopeptidase (497 aa).

Residues Lys-267 and Asp-272 each contribute to the Mn(2+) site. Residue Lys-279 is part of the active site. Residues Asp-290, Asp-349, and Glu-351 each contribute to the Mn(2+) site. The active site involves Arg-353.

This sequence belongs to the peptidase M17 family. It depends on Mn(2+) as a cofactor.

The protein localises to the cytoplasm. It catalyses the reaction Release of an N-terminal amino acid, Xaa-|-Yaa-, in which Xaa is preferably Leu, but may be other amino acids including Pro although not Arg or Lys, and Yaa may be Pro. Amino acid amides and methyl esters are also readily hydrolyzed, but rates on arylamides are exceedingly low.. It carries out the reaction Release of an N-terminal amino acid, preferentially leucine, but not glutamic or aspartic acids.. Presumably involved in the processing and regular turnover of intracellular proteins. Catalyzes the removal of unsubstituted N-terminal amino acids from various peptides. The sequence is that of Probable cytosol aminopeptidase from Pseudomonas putida (strain W619).